Consider the following 405-residue polypeptide: ATP phosphoribosyltransferase regulatory subunit (405 aa).

It belongs to the class-II aminoacyl-tRNA synthetase family. HisZ subfamily. Heteromultimer composed of HisG and HisZ subunits.

It is found in the cytoplasm. Its pathway is amino-acid biosynthesis; L-histidine biosynthesis; L-histidine from 5-phospho-alpha-D-ribose 1-diphosphate: step 1/9. Functionally, required for the first step of histidine biosynthesis. May allow the feedback regulation of ATP phosphoribosyltransferase activity by histidine. The sequence is that of ATP phosphoribosyltransferase regulatory subunit from Microcystis aeruginosa (strain NIES-843 / IAM M-2473).